The sequence spans 459 residues: Ceramide glucosyltransferase 3 (459 aa).

The chain crosses the membrane as a helical span at residues 77–97 (LIAIVGFVFVFCLYLIHIIAL). A short sequence motif (D1) is located at residue Asp156. Asp208 is a short sequence motif (D2). A short sequence motif (D3) is located at residue Asp302. The Proton acceptor role is filled by Asp302. The (Q/R)XXRW motif lies at 338–342 (RICRW). 2 helical membrane-spanning segments follow: residues 367-387 (LIMAFSLNHLVGLNIMPILIL) and 415-435 (FMLIWLLRELTAPFVFIKALL).

This sequence belongs to the glycosyltransferase 2 family. In terms of tissue distribution, expressed in pharyngeal intestinal valve, intestinal rectal valve and hypodermis.

The protein localises to the membrane. The enzyme catalyses an N-acylsphing-4-enine + UDP-alpha-D-glucose = a beta-D-glucosyl-(1&lt;-&gt;1')-N-acylsphing-4-enine + UDP + H(+). The catalysed reaction is an N-acyl-15-methylhexadecasphing-4-enine + UDP-alpha-D-glucose = an N-acyl-1-beta-D-glucosyl-15-methylhexadecasphing-4-enine + UDP + H(+). The protein operates within lipid metabolism; sphingolipid metabolism. Its function is as follows. Catalyzes the first glycosylation step in glycosphingolipid biosynthesis, the transfer of glucose to ceramide to produce glucosylceramides (GlcCer). GlcCer are known to contribute to the physical properties and physiological functions of membranes and may regulate signal transduction. Seems to be the major active form in the nematode. Only branched-chain sphingoid bases like 15-methylhexadecasphing-4-enine are used for generating complex sphingolipids in Caenorhabditis elegans. Together with cgt-1, plays a role in the trafficking of proteins such as mig-14 to the cell membrane in intestinal cells. The chain is Ceramide glucosyltransferase 3 from Caenorhabditis elegans.